The chain runs to 207 residues: Small ribosomal subunit protein uS2 (207 aa).

Belongs to the universal ribosomal protein uS2 family.

This chain is Small ribosomal subunit protein uS2, found in Methanocella arvoryzae (strain DSM 22066 / NBRC 105507 / MRE50).